The primary structure comprises 1143 residues: Disease resistance protein Pik-1 (1143 aa).

Residues 1–190 are structured coiled coil (CC) domain; it reads MEAAAMAVTA…PLRIMGGEMQ (190 aa). Positions 189–258 constitute an HMA domain; sequence MQKIVFKIPM…KVGHAELLQV (70 aa). The HMA-like domain stretch occupies residues 191–264; the sequence is KIVFKIPMVD…LLQVSQVKED (74 aa). The 289-residue stretch at 282–570 folds into the NB-ARC domain; the sequence is HEVKTICILG…WIAEGFVSEE (289 aa). LRR repeat units lie at residues 681 to 706, 708 to 731, 732 to 754, 756 to 777, 778 to 800, 802 to 823, 824 to 848, 945 to 968, 979 to 1002, and 1004 to 1027; these read FKRL…ICEQ, SLRV…MRKL, KHLE…IGEL, HLRI…IREL, QHLH…VGKL, NLKI…IGEL, NHLQ…QISQ, MPNL…INGT, DSRL…EFKF, and AGPA…VFRC.

It belongs to the disease resistance NB-LRR family. As to quaternary structure, interacts with AVR-Pik through its N-terminal part containing the HMA-like domain.

In terms of biological role, disease resistance (R) protein that specifically recognizes the AVR-Pik effector avirulence protein from M.oryzae. Resistance proteins guard the plant against pathogens that contain an appropriate avirulence protein via an indirect interaction with this avirulence protein. That triggers a defense system including the hypersensitive response, which restricts the pathogen growth. Contribution of Pik-2 is required to recognize the effector avirulence protein AVR-Pik. The polypeptide is Disease resistance protein Pik-1 (Oryza sativa subsp. japonica (Rice)).